Here is a 96-residue protein sequence, read N- to C-terminus: Protein Vpr (96 aa).

The tract at residues 1–42 (MEQAPENQGPQREPYNEWTLELLEELKSEAVRHFPRIWLHSL) is homooligomerization. Phosphoserine; by host is present on residues S79, S94, and S96.

This sequence belongs to the HIV-1 VPR protein family. As to quaternary structure, homooligomer, may form homodimer. Interacts with p6-gag region of the Pr55 Gag precursor protein through a (Leu-X-X)4 motif near the C-terminus of the P6gag protein. Interacts with host UNG. May interact with host RAD23A/HHR23A. Interacts with host VPRBP/DCAF1, leading to hijack the CUL4A-RBX1-DDB1-DCAF1/VPRBP complex, mediating ubiquitination of host proteins such as TERT and ZGPAT and arrest of the cell cycle in G2 phase. In terms of processing, phosphorylated on several residues by host. These phosphorylations regulate VPR activity for the nuclear import of the HIV-1 pre-integration complex.

The protein resides in the virion. It localises to the host nucleus. Its subcellular location is the host extracellular space. Its function is as follows. During virus replication, may deplete host UNG protein, and incude G2-M cell cycle arrest. Acts by targeting specific host proteins for degradation by the 26S proteasome, through association with the cellular CUL4A-DDB1 E3 ligase complex by direct interaction with host VPRPB/DCAF-1. Cell cycle arrest reportedly occurs within hours of infection and is not blocked by antiviral agents, suggesting that it is initiated by the VPR carried into the virion. Additionally, VPR induces apoptosis in a cell cycle dependent manner suggesting that these two effects are mechanistically linked. Detected in the serum and cerebrospinal fluid of AIDS patient, VPR may also induce cell death to bystander cells. In terms of biological role, during virus entry, plays a role in the transport of the viral pre-integration (PIC) complex to the host nucleus. This function is crucial for viral infection of non-dividing macrophages. May act directly at the nuclear pore complex, by binding nucleoporins phenylalanine-glycine (FG)-repeat regions. The sequence is that of Protein Vpr from Human immunodeficiency virus type 1 group M subtype B (isolate SF33) (HIV-1).